A 655-amino-acid chain; its full sequence is p-hydroxybenzoic acid efflux pump subunit AaeB (655 aa).

11 consecutive transmembrane segments (helical) span residues 13 to 33 (FAVKLATAIVLALFVGFHFQL), 38 to 58 (WAVLTAAIVAAGPAFAAGGEP), 69 to 89 (LRIIGTFIGCIAGLVIIIAMI), 93 to 113 (LLMILVCCIWAGFCTWISSLV), 121 to 141 (WGLAGYTALIIVITIQPEPLL), 152 to 172 (EIVIGIVCAIMADLLFSPRSI), 370 to 390 (LFWLWTGWTSGSGAMVMIAVV), 407 to 427 (FIYGTLAALPLGLLYFLVIIP), 431 to 451 (QSMLLLCISLAVLGFFLGIEV), 459 to 479 (MGALASTINIIVLDNPMTFHF), and 482 to 502 (FLDSALGQIVGCVLAFTVILL).

Belongs to the aromatic acid exporter ArAE (TC 2.A.85) family.

It localises to the cell inner membrane. Functionally, forms an efflux pump with AaeA. Could function as a metabolic relief valve, allowing to eliminate certain compounds when they accumulate to high levels in the cell. The chain is p-hydroxybenzoic acid efflux pump subunit AaeB from Shigella sonnei (strain Ss046).